The primary structure comprises 421 residues: Serine--tRNA ligase (421 aa).

Residue threonine 229–glutamate 231 coordinates L-serine. An ATP-binding site is contributed by arginine 260–glutamate 262. Residue glutamate 283 coordinates L-serine. Residue glutamate 347–serine 350 coordinates ATP. Serine 381 contacts L-serine.

It belongs to the class-II aminoacyl-tRNA synthetase family. Type-1 seryl-tRNA synthetase subfamily. Homodimer. The tRNA molecule binds across the dimer.

Its subcellular location is the cytoplasm. It carries out the reaction tRNA(Ser) + L-serine + ATP = L-seryl-tRNA(Ser) + AMP + diphosphate + H(+). It catalyses the reaction tRNA(Sec) + L-serine + ATP = L-seryl-tRNA(Sec) + AMP + diphosphate + H(+). It participates in aminoacyl-tRNA biosynthesis; selenocysteinyl-tRNA(Sec) biosynthesis; L-seryl-tRNA(Sec) from L-serine and tRNA(Sec): step 1/1. Catalyzes the attachment of serine to tRNA(Ser). Is also able to aminoacylate tRNA(Sec) with serine, to form the misacylated tRNA L-seryl-tRNA(Sec), which will be further converted into selenocysteinyl-tRNA(Sec). This Fusobacterium nucleatum subsp. nucleatum (strain ATCC 25586 / DSM 15643 / BCRC 10681 / CIP 101130 / JCM 8532 / KCTC 2640 / LMG 13131 / VPI 4355) protein is Serine--tRNA ligase.